The following is a 386-amino-acid chain: Demethylsterigmatocystin 6-O-methyltransferase (386 aa).

137–150 contacts substrate; sequence FDISGPCTQILPDF. The segment at 177 to 197 is substrate binding; the sequence is MFEWMPQHPKHMESLGHLMAL. Residues 228 to 229, aspartate 253, 273 to 274, and arginine 289 each bind S-adenosyl-L-methionine; these read GG and NF. Histidine 293 functions as the Proton acceptor in the catalytic mechanism.

It belongs to the class I-like SAM-binding methyltransferase superfamily. Cation-independent O-methyltransferase family. COMT subfamily.

It catalyses the reaction 6-demethylsterigmatocystin + S-adenosyl-L-methionine = sterigmatocystin + S-adenosyl-L-homocysteine + H(+). The protein operates within mycotoxin biosynthesis; aflatoxin biosynthesis. In terms of biological role, catalyzes both the conversion of demethylsterigmatocystin (DMST) to sterigmatocystin and the conversion of dihydrodemethylsterigmatocystin to dihydrosterigmatocystin (DHDMST) during aflatoxin biosynthesis. In Aspergillus flavus (strain ATCC 200026 / FGSC A1120 / IAM 13836 / NRRL 3357 / JCM 12722 / SRRC 167), this protein is Demethylsterigmatocystin 6-O-methyltransferase (omtB).